A 399-amino-acid polypeptide reads, in one-letter code: Putative endoplasmin-like protein (399 aa).

A Glycyl lysine isopeptide (Lys-Gly) (interchain with G-Cter in SUMO2) cross-link involves residue K130. A disordered region spans residues 350–399 (LDLAVVEEPDEEPEETAEDKEQDKDKEMDVGTDEEKQETAKESTAEKDEL). A compositionally biased stretch (acidic residues) spans 354–367 (VVEEPDEEPEETAE). Positions 368 to 399 (DKEQDKDKEMDVGTDEEKQETAKESTAEKDEL) are enriched in basic and acidic residues.

The protein belongs to the heat shock protein 90 family.

In terms of biological role, putative molecular chaperone. This chain is Putative endoplasmin-like protein (HSP90B2P), found in Homo sapiens (Human).